Consider the following 371-residue polypeptide: uncharacterized protein (371 aa).

Belongs to the glycerate kinase type-1 family.

This is an uncharacterized protein from Synechocystis sp. (strain ATCC 27184 / PCC 6803 / Kazusa).